The sequence spans 470 residues: Argininosuccinate lyase (470 aa).

This sequence belongs to the lyase 1 family. Argininosuccinate lyase subfamily.

Its subcellular location is the cytoplasm. It carries out the reaction 2-(N(omega)-L-arginino)succinate = fumarate + L-arginine. Its pathway is amino-acid biosynthesis; L-arginine biosynthesis; L-arginine from L-ornithine and carbamoyl phosphate: step 3/3. The sequence is that of Argininosuccinate lyase from Mycobacterium sp. (strain MCS).